A 295-amino-acid polypeptide reads, in one-letter code: Transcriptional regulator SirC (295 aa).

Residues 195 to 292 (EKVYNIIISD…KITPLSFMRT (98 aa)) enclose the HTH araC/xylS-type domain. 2 DNA-binding regions (H-T-H motif) span residues 212–233 (AEVAGKLFMSVSSLKRKLAAEE) and 259–282 (ISQVATMCGYDTPSYFIAIFKRHF).

Positive regulator of the expression of the invasion-associated type III secretion system encoded within SPI-1 (pathogenicity island 1). The protein is Transcriptional regulator SirC (sirC) of Salmonella typhimurium (strain SL1344).